The sequence spans 207 residues: ATP synthase subunit 5, mitochondrial (207 aa).

This sequence belongs to the ATPase delta chain family. In terms of assembly, F-type ATPases have 2 components, CF(1) - the catalytic core - and CF(0) - the membrane proton channel. CF(1) has five subunits: alpha(3), beta(3), gamma(1), delta(1), epsilon(1). CF(0) has three main subunits: a, b and c.

Its subcellular location is the mitochondrion. The protein localises to the mitochondrion inner membrane. Functionally, mitochondrial membrane ATP synthase (F(1)F(0) ATP synthase or Complex V) produces ATP from ADP in the presence of a proton gradient across the membrane which is generated by electron transport complexes of the respiratory chain. F-type ATPases consist of two structural domains, F(1) - containing the extramembraneous catalytic core and F(0) - containing the membrane proton channel, linked together by a central stalk and a peripheral stalk. During catalysis, ATP synthesis in the catalytic domain of F(1) is coupled via a rotary mechanism of the central stalk subunits to proton translocation. Part of the complex F(0) domain and the peripheric stalk, which acts as a stator to hold the catalytic alpha(3)beta(3) subcomplex and subunit a/ATP6 static relative to the rotary elements. This chain is ATP synthase subunit 5, mitochondrial (ATP5), found in Candida glabrata (strain ATCC 2001 / BCRC 20586 / JCM 3761 / NBRC 0622 / NRRL Y-65 / CBS 138) (Yeast).